A 43-amino-acid polypeptide reads, in one-letter code: Protein PsbN (43 aa).

The chain crosses the membrane as a helical span at residues 5–27 (TLVTIFISGSLVSFTGYALYTAF).

This sequence belongs to the PsbN family.

The protein localises to the plastid. It is found in the chloroplast thylakoid membrane. In terms of biological role, may play a role in photosystem I and II biogenesis. The chain is Protein PsbN from Piper cenocladum (Ant piper).